The primary structure comprises 484 residues: Regulator of G-protein signaling 9 (484 aa).

Positions 30-105 (PDTGVKTQSQ…PDSSLYRFQT (76 aa)) constitute a DEP domain. Residues 219-280 (ITAVKKEIMY…ITDDTQFWDL (62 aa)) enclose the G protein gamma domain. Positions 299-414 (NFSELIRDPK…LKSPIYKEML (116 aa)) constitute an RGS domain.

In terms of assembly, heterodimer with Gbeta5. Interacts with RGS7BP, leading to regulate the subcellular location of the heterodimer formed with Gbeta5. Component of the RGS9-1-Gbeta5 complex composed of RGS9 (RGS9-1), Gbeta5 (GNB5) and RGS9BP. In terms of processing, phosphorylation is decreased by light exposition.

It localises to the membrane. Inhibits signal transduction by increasing the GTPase activity of G protein alpha subunits thereby driving them into their inactive GDP-bound form. Binds to G(t)-alpha. Involved in phototransduction; key element in the recovery phase of visual transduction. This chain is Regulator of G-protein signaling 9, found in Tamias striatus (Eastern chipmunk).